The following is a 56-amino-acid chain: Small ribosomal subunit protein uS14 (56 aa).

The residue at position 9 (Ser9) is a Phosphoserine. Position 12 is an omega-N-methylarginine (Arg12). Zn(2+)-binding residues include Cys21, Cys24, Cys39, and Cys42. Lys48 is modified (N6-acetyllysine).

Belongs to the universal ribosomal protein uS14 family. Component of the 40S small ribosomal subunit. Zn(2+) serves as cofactor.

The protein localises to the cytoplasm. Its subcellular location is the cytosol. It is found in the rough endoplasmic reticulum. Its function is as follows. Component of the small ribosomal subunit. The ribosome is a large ribonucleoprotein complex responsible for the synthesis of proteins in the cell. The polypeptide is Small ribosomal subunit protein uS14 (RPS29) (Sus scrofa (Pig)).